A 147-amino-acid polypeptide reads, in one-letter code: Adenylylsulfatase HINT1 (147 aa).

The HIT domain maps to 37 to 147 (IFDKIISKEI…GGRQMNWPPG (111 aa)). A Histidine triad motif motif is present at residues 131–135 (HIHVH). The active-site Tele-AMP-histidine intermediate is H133. A substrate-binding site is contributed by H135.

It localises to the peroxisome. Its subcellular location is the plastid. The protein resides in the chloroplast. The catalysed reaction is adenosine 5'-phosphosulfate + H2O = sulfate + AMP + 2 H(+). Functionally, possesses adenylylsulfatase activity in vitro. The polypeptide is Adenylylsulfatase HINT1 (Arabidopsis thaliana (Mouse-ear cress)).